The primary structure comprises 382 residues: uncharacterized protein (382 aa).

Helical transmembrane passes span 14–34 (GLLL…LWLA), 45–65 (VVSS…GYVI), 79–99 (FIFA…SWLA), 102–122 (FVAG…LMCS), 131–151 (LLAA…LLVS), 157–177 (LMSV…PLLF), 204–224 (LGVN…GLMP), 235–255 (ASIG…QWPI), 270–290 (VQVF…AMAP), 291–311 (ALFI…AWAC), 325–345 (ALLL…AMLM), and 348–368 (FSDN…LLML).

The protein belongs to the major facilitator superfamily. YcaD (TC 2.A.1.26) family.

The protein resides in the cell inner membrane. This is an uncharacterized protein from Escherichia coli O6:K15:H31 (strain 536 / UPEC).